The following is a 185-amino-acid chain: Ribosome-recycling factor (185 aa).

The protein belongs to the RRF family.

Its subcellular location is the cytoplasm. Its function is as follows. Responsible for the release of ribosomes from messenger RNA at the termination of protein biosynthesis. May increase the efficiency of translation by recycling ribosomes from one round of translation to another. The sequence is that of Ribosome-recycling factor from Alkaliphilus oremlandii (strain OhILAs) (Clostridium oremlandii (strain OhILAs)).